The chain runs to 370 residues: tRNA-specific 2-thiouridylase MnmA (370 aa).

ATP contacts are provided by residues 14-21 and Met-40; that span reads GMSGGVDS. The interaction with target base in tRNA stretch occupies residues 100-102; sequence NPD. Catalysis depends on Cys-105, which acts as the Nucleophile. The cysteines at positions 105 and 205 are disulfide-linked. Gly-129 serves as a coordination point for ATP. Residues 155–157 are interaction with tRNA; that stretch reads KDQ. Catalysis depends on Cys-205, which acts as the Cysteine persulfide intermediate. Residues 321 to 322 form an interaction with tRNA region; the sequence is RY.

Belongs to the MnmA/TRMU family.

It is found in the cytoplasm. The enzyme catalyses S-sulfanyl-L-cysteinyl-[protein] + uridine(34) in tRNA + AH2 + ATP = 2-thiouridine(34) in tRNA + L-cysteinyl-[protein] + A + AMP + diphosphate + H(+). Functionally, catalyzes the 2-thiolation of uridine at the wobble position (U34) of tRNA, leading to the formation of s(2)U34. The protein is tRNA-specific 2-thiouridylase MnmA of Bordetella avium (strain 197N).